Reading from the N-terminus, the 191-residue chain is Thymidine kinase (191 aa).

ATP-binding positions include 15–22 and 88–91; these read GSMFSGKS and DEVQ. The active-site Proton acceptor is the glutamate 89. 4 residues coordinate Zn(2+): cysteine 145, cysteine 148, cysteine 183, and histidine 186.

The protein belongs to the thymidine kinase family. In terms of assembly, homotetramer.

The protein resides in the cytoplasm. It carries out the reaction thymidine + ATP = dTMP + ADP + H(+). This is Thymidine kinase from Macrococcus caseolyticus (strain JCSC5402) (Macrococcoides caseolyticum).